We begin with the raw amino-acid sequence, 174 residues long: Ubiquinone biosynthesis accessory factor UbiT (174 aa).

Residues 45–133 enclose the SCP2 domain; that stretch reads LDDGELEFLE…LGLYVKNLMD (89 aa).

This sequence belongs to the UbiT family.

It participates in cofactor biosynthesis; ubiquinone biosynthesis. Functionally, required for O(2)-independent ubiquinone (coenzyme Q) biosynthesis. Likely functions as an accessory factor. In Escherichia coli O157:H7, this protein is Ubiquinone biosynthesis accessory factor UbiT.